The sequence spans 359 residues: Chondroadherin (359 aa).

Residues 1–22 (MVRPMLLLSLGLLAGLLPALAA) form the signal peptide. A disulfide bridge connects residues C23 and C38. The LRRNT domain maps to 23-52 (CPQNCHCHSDLQHVICDKVGLQKIPKVSEK). LRR repeat units follow at residues 76 to 97 (NLVS…AFRG), 100 to 121 (QLIY…AFDD), 124 to 145 (ELTY…LLSP), 148 to 169 (NLFI…AFQG), 172 to 193 (DLRW…ALDD), 196 to 217 (NLAK…ALSK), 220 to 241 (VVEE…AFQS), 245 to 266 (YLET…AFLG), and 269 to 290 (TLKH…FPFD). Residue S144 is glycosylated (O-linked (GalNAc...) serine). The region spanning 300 to 348 (NPWKCTCQLRGLRRWLEAKASRPDATCASPAKFKGQHIRDTDAFRSCKF) is the LRRCT domain. 2 disulfides stabilise this stretch: C304/C346 and C306/C326.

This sequence belongs to the small leucine-rich proteoglycan (SLRP) family. SLRP class IV subfamily. As to quaternary structure, mostly monomeric. Interacts with collagen type II. As to expression, present in chondrocytes at all ages.

Its subcellular location is the secreted. The protein localises to the extracellular space. The protein resides in the extracellular matrix. In terms of biological role, promotes attachment of chondrocytes, fibroblasts, and osteoblasts. This binding is mediated (at least for chondrocytes and fibroblasts) by the integrin alpha(2)beta(1). May play an important role in the regulation of chondrocyte growth and proliferation. The sequence is that of Chondroadherin (CHAD) from Homo sapiens (Human).